The chain runs to 145 residues: Deoxyuridine 5'-triphosphate nucleotidohydrolase (145 aa).

Substrate-binding positions include 63–65, Q76, and 80–82; these read RSG and TVD.

Belongs to the dUTPase family. The cofactor is Mg(2+).

The enzyme catalyses dUTP + H2O = dUMP + diphosphate + H(+). Its pathway is pyrimidine metabolism; dUMP biosynthesis; dUMP from dCTP (dUTP route): step 2/2. In terms of biological role, this enzyme is involved in nucleotide metabolism: it produces dUMP, the immediate precursor of thymidine nucleotides and it decreases the intracellular concentration of dUTP so that uracil cannot be incorporated into DNA. This chain is Deoxyuridine 5'-triphosphate nucleotidohydrolase, found in Chlamydia trachomatis serovar L2 (strain ATCC VR-902B / DSM 19102 / 434/Bu).